The following is a 139-amino-acid chain: Nucleoside diphosphate kinase (139 aa).

Lysine 11, phenylalanine 59, arginine 87, threonine 93, arginine 104, and asparagine 114 together coordinate ATP. Histidine 117 functions as the Pros-phosphohistidine intermediate in the catalytic mechanism.

This sequence belongs to the NDK family. In terms of assembly, homotetramer. It depends on Mg(2+) as a cofactor.

Its subcellular location is the cytoplasm. The catalysed reaction is a 2'-deoxyribonucleoside 5'-diphosphate + ATP = a 2'-deoxyribonucleoside 5'-triphosphate + ADP. It catalyses the reaction a ribonucleoside 5'-diphosphate + ATP = a ribonucleoside 5'-triphosphate + ADP. Major role in the synthesis of nucleoside triphosphates other than ATP. The ATP gamma phosphate is transferred to the NDP beta phosphate via a ping-pong mechanism, using a phosphorylated active-site intermediate. In Coxiella burnetii (strain CbuK_Q154) (Coxiella burnetii (strain Q154)), this protein is Nucleoside diphosphate kinase.